Here is a 41-residue protein sequence, read N- to C-terminus: Chymotrypsin inhibitor (41 aa).

Inhibits chymotrypsin. In Eisenia hortensis (European nightcrawler), this protein is Chymotrypsin inhibitor.